Consider the following 490-residue polypeptide: Doublesex- and mab-3-related transcription factor A1 (490 aa).

Residues 1-13 (MERLPHGRRDRSG) are compositionally biased toward basic and acidic residues. The interval 1–31 (MERLPHGRRDRSGGCRPHLAPGRAAAPASAA) is disordered. Residues 20 to 31 (APGRAAAPASAA) show a composition bias toward low complexity. The DM DNA-binding region spans 86 to 133 (CARCRNHGVVSALKGHKRFCRWRDCACAKCTLIAERQRVMAAQVALRR). Disordered stretches follow at residues 152-171 (GSSG…ESPQ) and 207-289 (DRKQ…DLES). Residues 207 to 216 (DRKQEPKQRN) are compositionally biased toward basic and acidic residues. Composition is skewed to polar residues over residues 217 to 242 (CESC…SKGN) and 269 to 289 (PTDQ…DLES). The 36-residue stretch at 314 to 349 (RDPLGILTRIFPGYKHSRLEGILQFCKGDVVQAIEQ) folds into the DMA domain.

It belongs to the DMRT family. Widely expressed, with highest levels in ovary, testis, epididymis, preputial gland, vomeronasal organ, liver, salivary glands and heart. Also expressed throughout the brain with highest levels in the olfactory bulbs and medulla. Detected at similar levels in gonads of both sexes.

It is found in the nucleus. The polypeptide is Doublesex- and mab-3-related transcription factor A1 (Dmrta1) (Mus musculus (Mouse)).